A 200-amino-acid polypeptide reads, in one-letter code: Recombination protein RecR (200 aa).

The segment at cysteine 57–cysteine 72 adopts a C4-type zinc-finger fold. The region spanning threonine 80–proline 175 is the Toprim domain.

The protein belongs to the RecR family.

Functionally, may play a role in DNA repair. It seems to be involved in an RecBC-independent recombinational process of DNA repair. It may act with RecF and RecO. This chain is Recombination protein RecR, found in Pseudomonas putida (strain ATCC 700007 / DSM 6899 / JCM 31910 / BCRC 17059 / LMG 24140 / F1).